The sequence spans 71 residues: MNLAVIGAGIAVLTGLGAGIGIGIATGRATEAIARQPEAASKIQTALIIGAGLAEATAIYGLIIAFMILTK.

The next 2 helical transmembrane spans lie at Ala-4 to Ile-24 and Ile-48 to Ile-68.

The protein belongs to the ATPase C chain family. F-type ATPases have 2 components, F(1) - the catalytic core - and F(0) - the membrane proton channel. F(1) has five subunits: alpha(3), beta(3), gamma(1), delta(1), epsilon(1). F(0) has three main subunits: a(1), b(2) and c(10-14). The alpha and beta chains form an alternating ring which encloses part of the gamma chain. F(1) is attached to F(0) by a central stalk formed by the gamma and epsilon chains, while a peripheral stalk is formed by the delta and b chains.

It localises to the cell membrane. Functionally, f(1)F(0) ATP synthase produces ATP from ADP in the presence of a proton or sodium gradient. F-type ATPases consist of two structural domains, F(1) containing the extramembraneous catalytic core and F(0) containing the membrane proton channel, linked together by a central stalk and a peripheral stalk. During catalysis, ATP synthesis in the catalytic domain of F(1) is coupled via a rotary mechanism of the central stalk subunits to proton translocation. Key component of the F(0) channel; it plays a direct role in translocation across the membrane. A homomeric c-ring of between 10-14 subunits forms the central stalk rotor element with the F(1) delta and epsilon subunits. This Clostridium botulinum (strain Alaska E43 / Type E3) protein is ATP synthase subunit c.